The following is a 249-amino-acid chain: Microvitellogenin (249 aa).

The signal sequence occupies residues 1 to 17 (MLRTTVVLLTLAAIAFA).

In terms of biological role, small vitellogenic protein found in females. It is synthesized in the fat body, secreted into the hemolymph, and taken up by developing oocytes. The polypeptide is Microvitellogenin (MVG) (Manduca sexta (Tobacco hawkmoth)).